The sequence spans 304 residues: MGIDFLFILKALIIAIVEGLTEFVPVSSTGHMILVGDLIHFNTQSGGFPEMYEVVIQLGAILAVVVLYWRKISSSVVEFLSYIFSFIGLKASGDKRKYEKRLAESKTGFRFGINVIIGTIPAAILGLLFHDEIKEYLFSTKTVAIGFIVGGILLIVIENNFRKRAKRSKIVKDIDKMTYGQSLLVGCFQCLSLWPGMSRSASTIMGGWISGLSTTVATEFTFFLAIPAMVGASGLDLFKFDYSQMNATNLISLILGFIVAFIVSLVVIDKFINYLKKKPMRIFAIYRVFAGIVLAILIFTKVIS.

The next 8 helical transmembrane spans lie at 5–25 (FLFI…EFVP), 47–67 (GFPE…VVVL), 72–92 (ISSS…LKAS), 111–131 (FGIN…LFHD), 137–157 (LFST…LIVI), 209–231 (ISGL…AMVG), 248–268 (TNLI…LVVI), and 282–302 (IFAI…FTKV).

It belongs to the UppP family.

It is found in the cell membrane. It carries out the reaction di-trans,octa-cis-undecaprenyl diphosphate + H2O = di-trans,octa-cis-undecaprenyl phosphate + phosphate + H(+). Its function is as follows. Catalyzes the dephosphorylation of undecaprenyl diphosphate (UPP). Confers resistance to bacitracin. The polypeptide is Undecaprenyl-diphosphatase (Clostridium perfringens (strain SM101 / Type A)).